We begin with the raw amino-acid sequence, 854 residues long: Protein translocase subunit SecA (854 aa).

ATP-binding positions include Gln81, 99–103 (GEGKT), and Asp487.

This sequence belongs to the SecA family. Monomer and homodimer. Part of the essential Sec protein translocation apparatus which comprises SecA, SecYEG and auxiliary proteins SecDF. Other proteins may also be involved.

Its subcellular location is the cell membrane. It is found in the cytoplasm. It catalyses the reaction ATP + H2O + cellular proteinSide 1 = ADP + phosphate + cellular proteinSide 2.. In terms of biological role, part of the Sec protein translocase complex. Interacts with the SecYEG preprotein conducting channel. Has a central role in coupling the hydrolysis of ATP to the transfer of proteins into and across the cell membrane, serving as an ATP-driven molecular motor driving the stepwise translocation of polypeptide chains across the membrane. The protein is Protein translocase subunit SecA of Mycoplasma mobile (strain ATCC 43663 / 163K / NCTC 11711) (Mesomycoplasma mobile).